Reading from the N-terminus, the 716-residue chain is Fatty acid oxidation complex subunit alpha (716 aa).

Positions 1–188 (MIYQSPTIQV…KVGAIDAVVA (188 aa)) are enoyl-CoA hydratase/isomerase. Residue aspartate 295 coordinates substrate. The 3-hydroxyacyl-CoA dehydrogenase stretch occupies residues 310–716 (KDIKHAAVLG…SNNGSYYPKA (407 aa)). Residues methionine 323, aspartate 342, 399–401 (VVE), lysine 406, and serine 428 each bind NAD(+). Histidine 449 acts as the For 3-hydroxyacyl-CoA dehydrogenase activity in catalysis. Position 452 (asparagine 452) interacts with NAD(+). The substrate site is built by asparagine 499 and tyrosine 659.

The protein in the N-terminal section; belongs to the enoyl-CoA hydratase/isomerase family. It in the C-terminal section; belongs to the 3-hydroxyacyl-CoA dehydrogenase family. In terms of assembly, heterotetramer of two alpha chains (FadB) and two beta chains (FadA).

The enzyme catalyses a (3S)-3-hydroxyacyl-CoA + NAD(+) = a 3-oxoacyl-CoA + NADH + H(+). The catalysed reaction is a (3S)-3-hydroxyacyl-CoA = a (2E)-enoyl-CoA + H2O. It carries out the reaction a 4-saturated-(3S)-3-hydroxyacyl-CoA = a (3E)-enoyl-CoA + H2O. It catalyses the reaction (3S)-3-hydroxybutanoyl-CoA = (3R)-3-hydroxybutanoyl-CoA. The enzyme catalyses a (3Z)-enoyl-CoA = a 4-saturated (2E)-enoyl-CoA. The catalysed reaction is a (3E)-enoyl-CoA = a 4-saturated (2E)-enoyl-CoA. Its pathway is lipid metabolism; fatty acid beta-oxidation. Functionally, involved in the aerobic and anaerobic degradation of long-chain fatty acids via beta-oxidation cycle. Catalyzes the formation of 3-oxoacyl-CoA from enoyl-CoA via L-3-hydroxyacyl-CoA. It can also use D-3-hydroxyacyl-CoA and cis-3-enoyl-CoA as substrate. This Shewanella amazonensis (strain ATCC BAA-1098 / SB2B) protein is Fatty acid oxidation complex subunit alpha.